The chain runs to 961 residues: SH3 domain-binding protein 4 (961 aa).

One can recognise an SH3 1 domain in the interval G55 to Y114. Phosphoserine occurs at positions 131, 244, 249, 277, and 294. Positions T315–V452 constitute a ZU5 domain. A Phosphoserine modification is found at S635. One can recognise an SH3 2 domain in the interval S652 to K722.

Homodimer or homooligomer. Interacts with DNM2, EPS15, clathrin, the adapter protein complex 2/AP-2 and TFRC. Interacts with the Rag GTPases RRAGA, RRAGB, RRAGC and RRAGD; the interaction is most probably direct, preferentially occurs with their inactive GDP-bound form and is negatively regulated by amino acids. Phosphorylated upon EGF stimulation. Phosphorylation prevents interaction with DNM2.

It localises to the membrane. It is found in the clathrin-coated pit. Its subcellular location is the cytoplasmic vesicle. The protein resides in the clathrin-coated vesicle. The protein localises to the nucleus. Functionally, may function in transferrin receptor internalization at the plasma membrane through a cargo-specific control of clathrin-mediated endocytosis. Alternatively, may act as a negative regulator of the amino acid-induced TOR signaling by inhibiting the formation of active Rag GTPase complexes. Preferentially binds inactive Rag GTPase complexes and prevents their interaction with the mTORC1 complex inhibiting its relocalization to lysosomes and its activation. Thereby, may indirectly regulate cell growth, proliferation and autophagy. This chain is SH3 domain-binding protein 4 (Sh3bp4), found in Rattus norvegicus (Rat).